We begin with the raw amino-acid sequence, 68 residues long: ATP synthase F(0) complex subunit 8 (68 aa).

Residues 8-24 traverse the membrane as a helical segment; the sequence is VWPTTITPMLLTLFLIT. Lysine 54 carries the N6-acetyllysine; alternate modification. Lysine 54 is modified (N6-succinyllysine; alternate). Lysine 57 carries the N6-acetyllysine modification.

Belongs to the ATPase protein 8 family. Component of the ATP synthase complex composed at least of ATP5F1A/subunit alpha, ATP5F1B/subunit beta, ATP5MC1/subunit c (homooctomer), MT-ATP6/subunit a, MT-ATP8/subunit 8, ATP5ME/subunit e, ATP5MF/subunit f, ATP5MG/subunit g, ATP5MK/subunit k, ATP5MJ/subunit j, ATP5F1C/subunit gamma, ATP5F1D/subunit delta, ATP5F1E/subunit epsilon, ATP5PF/subunit F6, ATP5PB/subunit b, ATP5PD/subunit d, ATP5PO/subunit OSCP. ATP synthase complex consists of a soluble F(1) head domain (subunits alpha(3) and beta(3)) - the catalytic core - and a membrane F(0) domain - the membrane proton channel (subunits c, a, 8, e, f, g, k and j). These two domains are linked by a central stalk (subunits gamma, delta, and epsilon) rotating inside the F1 region and a stationary peripheral stalk (subunits F6, b, d, and OSCP). Interacts with PRICKLE3.

The protein localises to the mitochondrion membrane. In terms of biological role, subunit 8, of the mitochondrial membrane ATP synthase complex (F(1)F(0) ATP synthase or Complex V) that produces ATP from ADP in the presence of a proton gradient across the membrane which is generated by electron transport complexes of the respiratory chain. ATP synthase complex consist of a soluble F(1) head domain - the catalytic core - and a membrane F(1) domain - the membrane proton channel. These two domains are linked by a central stalk rotating inside the F(1) region and a stationary peripheral stalk. During catalysis, ATP synthesis in the catalytic domain of F(1) is coupled via a rotary mechanism of the central stalk subunits to proton translocation. In vivo, can only synthesize ATP although its ATP hydrolase activity can be activated artificially in vitro. Part of the complex F(0) domain. The chain is ATP synthase F(0) complex subunit 8 from Pan paniscus (Pygmy chimpanzee).